The primary structure comprises 448 residues: Exodeoxyribonuclease 7 large subunit (448 aa).

The protein belongs to the XseA family. In terms of assembly, heterooligomer composed of large and small subunits.

It localises to the cytoplasm. The enzyme catalyses Exonucleolytic cleavage in either 5'- to 3'- or 3'- to 5'-direction to yield nucleoside 5'-phosphates.. Functionally, bidirectionally degrades single-stranded DNA into large acid-insoluble oligonucleotides, which are then degraded further into small acid-soluble oligonucleotides. The polypeptide is Exodeoxyribonuclease 7 large subunit (Nitrosomonas europaea (strain ATCC 19718 / CIP 103999 / KCTC 2705 / NBRC 14298)).